The primary structure comprises 497 residues: Uridine 5'-monophosphate synthase (497 aa).

The tract at residues 8 to 226 is OPRTase; that stretch reads TRNGALKRNL…KLEINSELEN (219 aa). A domain linker region spans residues 227-232; the sequence is LSSLPY. The OMPdecase stretch occupies residues 233–496; it reads VENVRTPLAE…WDALTRSDDS (264 aa). Residues aspartate 271 and 293 to 295 each bind UMP; that span reads KLH. Orotidine 5'-phosphate is bound at residue lysine 293. Catalysis depends on for OMPdecase activity residues aspartate 324, lysine 326, and aspartate 329. Orotidine 5'-phosphate-binding positions include lysine 326, aspartate 329, threonine 333, serine 387, 446–448, and 466–467; these read QQW and GR. Residues aspartate 329, threonine 333, serine 387, 446-448, and 466-467 contribute to the UMP site; these read QQW and GR.

This sequence in the N-terminal section; belongs to the purine/pyrimidine phosphoribosyltransferase family. It in the C-terminal section; belongs to the OMP decarboxylase family. In terms of tissue distribution, expressed in intestine and in neurons near the nerve ring and rectum.

The protein resides in the cytoplasm. It catalyses the reaction orotidine 5'-phosphate + diphosphate = orotate + 5-phospho-alpha-D-ribose 1-diphosphate. It carries out the reaction orotidine 5'-phosphate + H(+) = UMP + CO2. It participates in pyrimidine metabolism; UMP biosynthesis via de novo pathway; UMP from orotate: step 1/2. It functions in the pathway pyrimidine metabolism; UMP biosynthesis via de novo pathway; UMP from orotate: step 2/2. Its function is as follows. Bifunctional enzyme which catalyzes the formation of UMP from orotate in the de novo pathway of pyrimidine biosynthesis. May also form UMP from uracil. Regulates the size of gut granules during embryonic development. Involved in resistance to DNA damaging agents including UV-C and X-ray radiation. The chain is Uridine 5'-monophosphate synthase from Caenorhabditis elegans.